The sequence spans 320 residues: Serpentine receptor class gamma-15 (320 aa).

A run of 7 helical transmembrane segments spans residues Thr-29–Val-49, Gly-57–Ile-77, Phe-85–Ile-105, Val-151–Pro-171, Leu-197–Thr-217, Ile-240–Thr-260, and Leu-268–Phe-288.

It belongs to the nematode receptor-like protein srg family.

The protein resides in the membrane. This Caenorhabditis elegans protein is Serpentine receptor class gamma-15 (srg-15).